The chain runs to 809 residues: Sucrose synthase 4 (809 aa).

The interval 275 to 753 (MIFNVVVVSP…GLQRIYEKYT (479 aa)) is GT-B glycosyltransferase.

It belongs to the glycosyltransferase 1 family. Plant sucrose synthase subfamily. As to expression, predominantly expressed in the leaf tissues and in caryopses.

The enzyme catalyses an NDP-alpha-D-glucose + D-fructose = a ribonucleoside 5'-diphosphate + sucrose + H(+). Functionally, sucrose-cleaving enzyme that provides UDP-glucose and fructose for various metabolic pathways. The polypeptide is Sucrose synthase 4 (SUS4) (Oryza sativa subsp. japonica (Rice)).